Here is a 216-residue protein sequence, read N- to C-terminus: Probable transaldolase (216 aa).

The Schiff-base intermediate with substrate role is filled by lysine 83.

It belongs to the transaldolase family. Type 3B subfamily.

The protein localises to the cytoplasm. It catalyses the reaction D-sedoheptulose 7-phosphate + D-glyceraldehyde 3-phosphate = D-erythrose 4-phosphate + beta-D-fructose 6-phosphate. It participates in carbohydrate degradation; pentose phosphate pathway; D-glyceraldehyde 3-phosphate and beta-D-fructose 6-phosphate from D-ribose 5-phosphate and D-xylulose 5-phosphate (non-oxidative stage): step 2/3. Its function is as follows. Transaldolase is important for the balance of metabolites in the pentose-phosphate pathway. The chain is Probable transaldolase from Hyphomonas neptunium (strain ATCC 15444).